Consider the following 328-residue polypeptide: Malate dehydrogenase (328 aa).

12–18 is a binding site for NAD(+); that stretch reads GAAGQIA. Substrate contacts are provided by Arg93 and Arg99. NAD(+) contacts are provided by residues Asn106, Gln113, and 130 to 132; that span reads VGN. The substrate site is built by Asn132 and Arg163. His188 serves as the catalytic Proton acceptor.

Belongs to the LDH/MDH superfamily. MDH type 2 family.

It carries out the reaction (S)-malate + NAD(+) = oxaloacetate + NADH + H(+). Functionally, catalyzes the reversible oxidation of malate to oxaloacetate. This Burkholderia multivorans (strain ATCC 17616 / 249) protein is Malate dehydrogenase.